The primary structure comprises 577 residues: MNKETLAERLNASAGRQKADTVIKNGKIMDVFNQEWISADIAITGGVIVGLGEYEGEEVIDAEGQMIVPGFIDGHVHIESSMVTPIEFAKAVLPHGVTTVITDPHEIANVSGAKGISFMIEQAKKAPLNIRFMLPSCVPAASFERSGAVLKAEDLKPFYQEKEVLGLAEVMDYVSVAEGEEDMLQKLLDAKRHGKRIDGHLAGLSSDIINIYRTAMVSNDHEVTTKEEALDRIRRGMYVMLREGSVAKNTLNVLPAVNEKNARRFFFCTDDKHVDDLLSEGSVNHQVKMAIKAGLDPFLAYQLASLNAAECYGLETKGAVAPGFDADLLFISDVREAVVTKTMVAGRTVAENGRTVYEQSAGSYSPDQALLDTVRLKAPLTESDFHIPIQEGKKMNVIEMIPNHLETRKKEVPAPSADAFCPDTENDLLKIAVAERHSGEKMIGLGIVQGFGLKEGAIATTISHDSHNIIAVGTNDADLAKAINRLRDTGGGLTAVKNGELLHSVPLPIAGLLSDKSAEWVNDSLGVLHEKLPLLGFTGDFNPFLTLSFLALPVIPDIKMTAAGLFDVKAFQHIPLQ.

The protein belongs to the metallo-dependent hydrolases superfamily. Adenine deaminase family. The cofactor is Mn(2+).

It catalyses the reaction adenine + H2O + H(+) = hypoxanthine + NH4(+). The protein is Adenine deaminase of Bacillus velezensis (strain DSM 23117 / BGSC 10A6 / LMG 26770 / FZB42) (Bacillus amyloliquefaciens subsp. plantarum).